Here is a 389-residue protein sequence, read N- to C-terminus: Alkanesulfonate monooxygenase (389 aa).

This sequence belongs to the SsuD family.

It carries out the reaction an alkanesulfonate + FMNH2 + O2 = an aldehyde + FMN + sulfite + H2O + 2 H(+). Its function is as follows. Catalyzes the desulfonation of aliphatic sulfonates. In Variovorax paradoxus (strain S110), this protein is Alkanesulfonate monooxygenase.